Here is a 66-residue protein sequence, read N- to C-terminus: MTQLEEQLHNVETVRSITMQLEMALAKLKKDMMRGGDAKQYQVWQSESKAIESAIAIIHYVAGGLK.

It belongs to the YscE family. Component of the heterodimeric YscE-YscG chaperone. The YscE-YscG chaperone forms a stable ternary complex with YscF/SctF.

It is found in the cytoplasm. In terms of biological role, chaperone of the type III secretion system (T3SS), also called injectisome, which is used to inject bacterial effector proteins into eukaryotic host cells. Along with YscG, prevents premature polymerization of the YscF/SctF needle protein within the cytoplasm. Required for Yop secretion. This chain is Type 3 secretion system chaperone YscE, found in Yersinia enterocolitica.